The chain runs to 829 residues: MEYNHQEIEAKWQKYWADNKTFRTGTDKNKPKFYALDMFPYPSGAGLHVGHPEGYTATDILSRYKRAQGFNVLHPMGWDAFGLPAEQYAMDTGNDPAEFTAENIANFKRQINSLGFSYDWEREVNTTDPNFYKWTQWIFTKLYEKGLAYEAEVAVNWVEELGTAIANEEVLPDGTSERGGYPVVRKPMRQWMLKITAYAERLLEDLEEVDWPESIKEMQRNWIGKSVGADVTFEVAGTDKSFEVFTTRPDTLFGATYAVLAPEHDLVDAITTPEQKEAVAEYRRKASLKSDLARTDLSKEKTGAFTGAYAINPINGRKMPIWVADYVLASYGHGAVMAVPAHDERDWEFAKVYGLEILPVVEGGNVEEAVYTEDGPHINSEFLNGLDKAQAIEKAIEFLEEKKIGKKKITYRLRDWLFSRQRYWGEPIPIIHWEDGTSTALSEDELPLVLPVTSDIKPSGTGESPLANLTDWLEVTRADGLKGRRETNTMPQWAGSSWYYLRYIDPNNSEALADPELLKEWLPVDIYVGGAEHAVLHLLYARFWHKVLYDLGVVPTKEPFQKLFNQGMILGTSYRDHRGALVATDKVEKRDGGFYHMETGEALEQAPAKMSKSLKNVVNPDDVVEHYGADTLRVYEMFMGPLDASIPWSEEGLEGARKFLDRAVRMIENSEIKAENNGELDKVYNETVKNVTERLDLMYFNTAISQLMIFVNAVNKAKALPLEYANGFVQLLAPFAPHIAEELWVKLGNEAGISYVAWPTFDESKLIESEVEIVVQINGKLKAKIKIAKDLAREELEKIGRESVAEALEGKNVVKVIAVPNKLVNIVVK.

The 'HIGH' region motif lies at 40–51 (PYPSGAGLHVGH). The 'KMSKS' region motif lies at 609-613 (KMSKS). K612 is an ATP binding site.

Belongs to the class-I aminoacyl-tRNA synthetase family.

The protein localises to the cytoplasm. It carries out the reaction tRNA(Leu) + L-leucine + ATP = L-leucyl-tRNA(Leu) + AMP + diphosphate. This chain is Leucine--tRNA ligase, found in Lactococcus lactis subsp. lactis (strain IL1403) (Streptococcus lactis).